A 515-amino-acid chain; its full sequence is Forkhead box protein H1 (515 aa).

Positions 55–103 (YREGGTWSPDRGSMHGLSPGTQEGSCTQAEGTKDSLGGDETLSRKSKKK) are disordered. Residues 73–84 (PGTQEGSCTQAE) are compositionally biased toward polar residues. Residues 110-206 (KPPYSYLAMI…MKLQNTALTR (97 aa)) constitute a DNA-binding region (fork-head). A disordered region spans residues 307 to 399 (YPQSKPTRNG…EPPKKMPLLS (93 aa)). Low complexity predominate over residues 322 to 339 (SASHSTYSSSSSSISTIS). Polar residues predominate over residues 375–388 (STPSSDTDAGNYSP). Residues 377-503 (PSSDTDAGNY…PSFLGQCLGS (127 aa)) are SMAD-interaction domain (SID). Positions 402 to 406 (LPTSY) match the Fast/FoxH1 motif 1 (FM1) motif. The Fast/FoxH1 motif 2 (FM2) motif lies at 412–418 (PNVVAPP). The short motif at 467–488 (LDNMLKTVPPNKSVFDVLTSHP) is the SMAD-interaction motif (SIM) element.

In terms of assembly, ARF1 contains 2 smad2s, 1 smad4 and 1 foxh1/fast-1 protein. Interaction with smad4 is most likely indirect through interaction with the MH2 domain of smad2. Binds to the MH2 domain of smad3, which can incorporate into the ARF1 complex. The ARF1 and ARF2 complexes are activated by distinct TGF-beta family members; formation of ARF1 is promoted by activin. Interacts (via Fork-head domain) with gtf2ird1/wbscr11 (via repeats 4-5).

The protein resides in the nucleus. In terms of biological role, transcriptional activator. Recognizes and binds to the DNA sequence 5'-TGT[GT][GT]ATT-3'. Upon TGF-beta induction, forms a transcriptionally active complex with smad2 and smad4 called activin-responsive factor 1 (ARF1), which binds a site on the mix-B/mix.2 promoter called the activin response element (ARE). Binds to activated smads and the ARE with much lower affinity than fast3. Necessary for the first steps in mesoderm specification, directly inducing mesodermal genes. Acts with fast3 to control the convergent extension movements of gastrulation. Binds to the proximal element (PE) of the gsc gene and cooperates with gtf2ird1/wbscr11 and SMAD proteins to regulate gsc transcription. This chain is Forkhead box protein H1, found in Xenopus tropicalis (Western clawed frog).